A 380-amino-acid chain; its full sequence is Guanine nucleotide-binding protein subunit beta (380 aa).

WD repeat units lie at residues 64–94 (GHSG…IVWN), 106–136 (LHCP…SIFN), 155–186 (GHKG…VLWD), 203–234 (GHTA…RLWD), 247–277 (GHED…RLFD), 296–326 (NELP…YVWD), and 342–372 (SHDG…KIWA).

This sequence belongs to the WD repeat G protein beta family. In terms of assembly, g proteins are composed of 3 units, alpha, beta and gamma. In terms of tissue distribution, present in the root, leaf and tassel.

Functionally, guanine nucleotide-binding proteins (G proteins) are involved as a modulator or transducer in various transmembrane signaling systems. The beta and gamma chains are required for the GTPase activity, for replacement of GDP by GTP, and for G protein-effector interaction. The chain is Guanine nucleotide-binding protein subunit beta (GB1) from Zea mays (Maize).